We begin with the raw amino-acid sequence, 204 residues long: Urease accessory protein UreG (204 aa).

11–18 lines the GTP pocket; it reads GPVGAGKT.

Belongs to the SIMIBI class G3E GTPase family. UreG subfamily. As to quaternary structure, homodimer. UreD, UreF and UreG form a complex that acts as a GTP-hydrolysis-dependent molecular chaperone, activating the urease apoprotein by helping to assemble the nickel containing metallocenter of UreC. The UreE protein probably delivers the nickel.

It localises to the cytoplasm. Functionally, facilitates the functional incorporation of the urease nickel metallocenter. This process requires GTP hydrolysis, probably effectuated by UreG. The chain is Urease accessory protein UreG from Staphylococcus epidermidis (strain ATCC 12228 / FDA PCI 1200).